Consider the following 440-residue polypeptide: Xaa-Pro dipeptidase (440 aa).

5 residues coordinate Mn(2+): aspartate 244, aspartate 255, histidine 335, glutamate 380, and glutamate 419.

Belongs to the peptidase M24B family. Bacterial-type prolidase subfamily. Mn(2+) serves as cofactor.

The catalysed reaction is Xaa-L-Pro dipeptide + H2O = an L-alpha-amino acid + L-proline. Functionally, splits dipeptides with a prolyl residue in the C-terminal position. The sequence is that of Xaa-Pro dipeptidase from Shewanella denitrificans (strain OS217 / ATCC BAA-1090 / DSM 15013).